A 100-amino-acid polypeptide reads, in one-letter code: Aspartyl/glutamyl-tRNA(Asn/Gln) amidotransferase subunit C (100 aa).

Belongs to the GatC family. As to quaternary structure, heterotrimer of A, B and C subunits.

It catalyses the reaction L-glutamyl-tRNA(Gln) + L-glutamine + ATP + H2O = L-glutaminyl-tRNA(Gln) + L-glutamate + ADP + phosphate + H(+). The enzyme catalyses L-aspartyl-tRNA(Asn) + L-glutamine + ATP + H2O = L-asparaginyl-tRNA(Asn) + L-glutamate + ADP + phosphate + 2 H(+). Its function is as follows. Allows the formation of correctly charged Asn-tRNA(Asn) or Gln-tRNA(Gln) through the transamidation of misacylated Asp-tRNA(Asn) or Glu-tRNA(Gln) in organisms which lack either or both of asparaginyl-tRNA or glutaminyl-tRNA synthetases. The reaction takes place in the presence of glutamine and ATP through an activated phospho-Asp-tRNA(Asn) or phospho-Glu-tRNA(Gln). The sequence is that of Aspartyl/glutamyl-tRNA(Asn/Gln) amidotransferase subunit C from Streptococcus equi subsp. zooepidemicus (strain H70).